Consider the following 274-residue polypeptide: 4-hydroxy-3-methylbut-2-enyl diphosphate reductase (274 aa).

[4Fe-4S] cluster is bound at residue Cys-12. Positions 36 and 70 each coordinate (2E)-4-hydroxy-3-methylbut-2-enyl diphosphate. Residues His-36 and His-70 each contribute to the dimethylallyl diphosphate site. His-36 and His-70 together coordinate isopentenyl diphosphate. Cys-92 is a [4Fe-4S] cluster binding site. Residue His-120 participates in (2E)-4-hydroxy-3-methylbut-2-enyl diphosphate binding. Residue His-120 participates in dimethylallyl diphosphate binding. His-120 is an isopentenyl diphosphate binding site. Glu-122 acts as the Proton donor in catalysis. Thr-158 contacts (2E)-4-hydroxy-3-methylbut-2-enyl diphosphate. Cys-186 contributes to the [4Fe-4S] cluster binding site. The (2E)-4-hydroxy-3-methylbut-2-enyl diphosphate site is built by Ser-214, Ser-215, Asn-216, and Ser-258. Residues Ser-214, Ser-215, Asn-216, and Ser-258 each contribute to the dimethylallyl diphosphate site. Ser-214, Ser-215, Asn-216, and Ser-258 together coordinate isopentenyl diphosphate.

It belongs to the IspH family. It depends on [4Fe-4S] cluster as a cofactor.

It catalyses the reaction isopentenyl diphosphate + 2 oxidized [2Fe-2S]-[ferredoxin] + H2O = (2E)-4-hydroxy-3-methylbut-2-enyl diphosphate + 2 reduced [2Fe-2S]-[ferredoxin] + 2 H(+). It carries out the reaction dimethylallyl diphosphate + 2 oxidized [2Fe-2S]-[ferredoxin] + H2O = (2E)-4-hydroxy-3-methylbut-2-enyl diphosphate + 2 reduced [2Fe-2S]-[ferredoxin] + 2 H(+). Its pathway is isoprenoid biosynthesis; dimethylallyl diphosphate biosynthesis; dimethylallyl diphosphate from (2E)-4-hydroxy-3-methylbutenyl diphosphate: step 1/1. It functions in the pathway isoprenoid biosynthesis; isopentenyl diphosphate biosynthesis via DXP pathway; isopentenyl diphosphate from 1-deoxy-D-xylulose 5-phosphate: step 6/6. In terms of biological role, catalyzes the conversion of 1-hydroxy-2-methyl-2-(E)-butenyl 4-diphosphate (HMBPP) into a mixture of isopentenyl diphosphate (IPP) and dimethylallyl diphosphate (DMAPP). Acts in the terminal step of the DOXP/MEP pathway for isoprenoid precursor biosynthesis. The sequence is that of 4-hydroxy-3-methylbut-2-enyl diphosphate reductase from Campylobacter concisus (strain 13826).